Reading from the N-terminus, the 185-residue chain is MSEKAKLIQLIHIGKQQLNMDEFSYREMVKRLTNKTSSTKCTVVELLKILHEMQQKGAKVKHFAKRGTKPTAYSPATGEVKVKSEIAHKIRAVWIQMGKHGFLADPSXKALNSYMRKVMNKGKSVLALNVGALNSNDASRFLEILKKWHKRVMLKRLAEKYGCITSAETGYDELCLVFKNYQGVA.

To phage Mu protein gp16.

The protein is Mu-like prophage FluMu protein gp16 of Haemophilus influenzae (strain ATCC 51907 / DSM 11121 / KW20 / Rd).